A 160-amino-acid chain; its full sequence is SsrA-binding protein (160 aa).

A disordered region spans residues 132–160; sequence KIHDKRDDMQKKDAQQEIARALKSSNRYE. Positions 135–146 are enriched in basic and acidic residues; that stretch reads DKRDDMQKKDAQ.

This sequence belongs to the SmpB family.

Its subcellular location is the cytoplasm. Its function is as follows. Required for rescue of stalled ribosomes mediated by trans-translation. Binds to transfer-messenger RNA (tmRNA), required for stable association of tmRNA with ribosomes. tmRNA and SmpB together mimic tRNA shape, replacing the anticodon stem-loop with SmpB. tmRNA is encoded by the ssrA gene; the 2 termini fold to resemble tRNA(Ala) and it encodes a 'tag peptide', a short internal open reading frame. During trans-translation Ala-aminoacylated tmRNA acts like a tRNA, entering the A-site of stalled ribosomes, displacing the stalled mRNA. The ribosome then switches to translate the ORF on the tmRNA; the nascent peptide is terminated with the 'tag peptide' encoded by the tmRNA and targeted for degradation. The ribosome is freed to recommence translation, which seems to be the essential function of trans-translation. The protein is SsrA-binding protein of Leptospira borgpetersenii serovar Hardjo-bovis (strain JB197).